We begin with the raw amino-acid sequence, 154 residues long: Interleukin-2 (154 aa).

An N-terminal signal peptide occupies residues 1 to 20; that stretch reads MYKMQLLCCIALTLALMANG. Residue T23 is glycosylated (O-linked (GalNAc...) threonine). C78 and C126 are disulfide-bonded.

This sequence belongs to the IL-2 family.

Its subcellular location is the secreted. Cytokine produced by activated CD4-positive helper T-cells and to a lesser extend activated CD8-positive T-cells and natural killer (NK) cells that plays pivotal roles in the immune response and tolerance. Binds to a receptor complex composed of either the high-affinity trimeric IL-2R (IL2RA/CD25, IL2RB/CD122 and IL2RG/CD132) or the low-affinity dimeric IL-2R (IL2RB and IL2RG). Interaction with the receptor leads to oligomerization and conformation changes in the IL-2R subunits resulting in downstream signaling starting with phosphorylation of JAK1 and JAK3. In turn, JAK1 and JAK3 phosphorylate the receptor to form a docking site leading to the phosphorylation of several substrates including STAT5. This process leads to activation of several pathways including STAT, phosphoinositide-3-kinase/PI3K and mitogen-activated protein kinase/MAPK pathways. Functions as a T-cell growth factor and can increase NK-cell cytolytic activity as well. Promotes strong proliferation of activated B-cells and subsequently immunoglobulin production. Plays a pivotal role in regulating the adaptive immune system by controlling the survival and proliferation of regulatory T-cells, which are required for the maintenance of immune tolerance. Moreover, participates in the differentiation and homeostasis of effector T-cell subsets, including Th1, Th2, Th17 as well as memory CD8-positive T-cells. This is Interleukin-2 (IL2) from Sus scrofa (Pig).